Here is a 1209-residue protein sequence, read N- to C-terminus: DNA-directed RNA polymerase subunit beta'' (1209 aa).

Zn(2+) contacts are provided by C233, C308, C315, and C318.

Belongs to the RNA polymerase beta' chain family. RpoC2 subfamily. In plastids the minimal PEP RNA polymerase catalytic core is composed of four subunits: alpha, beta, beta', and beta''. When a (nuclear-encoded) sigma factor is associated with the core the holoenzyme is formed, which can initiate transcription. Zn(2+) is required as a cofactor.

The protein resides in the plastid. Its subcellular location is the chloroplast. The enzyme catalyses RNA(n) + a ribonucleoside 5'-triphosphate = RNA(n+1) + diphosphate. In terms of biological role, DNA-dependent RNA polymerase catalyzes the transcription of DNA into RNA using the four ribonucleoside triphosphates as substrates. The chain is DNA-directed RNA polymerase subunit beta'' from Pinus koraiensis (Korean pine).